The sequence spans 247 residues: DNA polymerase sliding clamp (247 aa).

Belongs to the PCNA family. Homotrimer. The subunits circularize to form a toroid; DNA passes through its center. Replication factor C (RFC) is required to load the toroid on the DNA.

Sliding clamp subunit that acts as a moving platform for DNA processing. Responsible for tethering the catalytic subunit of DNA polymerase and other proteins to DNA during high-speed replication. The sequence is that of DNA polymerase sliding clamp from Halobacterium salinarum (strain ATCC 29341 / DSM 671 / R1).